The chain runs to 178 residues: ATP-dependent protease subunit HslV (178 aa).

T5 is a catalytic residue. S161, C164, and T167 together coordinate Na(+).

This sequence belongs to the peptidase T1B family. HslV subfamily. A double ring-shaped homohexamer of HslV is capped on each side by a ring-shaped HslU homohexamer. The assembly of the HslU/HslV complex is dependent on binding of ATP.

It localises to the cytoplasm. It carries out the reaction ATP-dependent cleavage of peptide bonds with broad specificity.. Its activity is regulated as follows. Allosterically activated by HslU binding. Protease subunit of a proteasome-like degradation complex believed to be a general protein degrading machinery. The polypeptide is ATP-dependent protease subunit HslV (Syntrophomonas wolfei subsp. wolfei (strain DSM 2245B / Goettingen)).